The following is a 426-amino-acid chain: Tol-Pal system protein TolB (426 aa).

An N-terminal signal peptide occupies residues 1–25 (MNILLSRFRLLLAAALAALSWGAQA).

Belongs to the TolB family. The Tol-Pal system is composed of five core proteins: the inner membrane proteins TolA, TolQ and TolR, the periplasmic protein TolB and the outer membrane protein Pal. They form a network linking the inner and outer membranes and the peptidoglycan layer.

It is found in the periplasm. Functionally, part of the Tol-Pal system, which plays a role in outer membrane invagination during cell division and is important for maintaining outer membrane integrity. This Aromatoleum aromaticum (strain DSM 19018 / LMG 30748 / EbN1) (Azoarcus sp. (strain EbN1)) protein is Tol-Pal system protein TolB.